The following is a 111-amino-acid chain: Pyrimidine/purine nucleoside phosphorylase 1 (111 aa).

This sequence belongs to the nucleoside phosphorylase PpnP family.

The enzyme catalyses a purine D-ribonucleoside + phosphate = a purine nucleobase + alpha-D-ribose 1-phosphate. It catalyses the reaction adenosine + phosphate = alpha-D-ribose 1-phosphate + adenine. The catalysed reaction is cytidine + phosphate = cytosine + alpha-D-ribose 1-phosphate. It carries out the reaction guanosine + phosphate = alpha-D-ribose 1-phosphate + guanine. The enzyme catalyses inosine + phosphate = alpha-D-ribose 1-phosphate + hypoxanthine. It catalyses the reaction thymidine + phosphate = 2-deoxy-alpha-D-ribose 1-phosphate + thymine. The catalysed reaction is uridine + phosphate = alpha-D-ribose 1-phosphate + uracil. It carries out the reaction xanthosine + phosphate = alpha-D-ribose 1-phosphate + xanthine. Catalyzes the phosphorolysis of diverse nucleosides, yielding D-ribose 1-phosphate and the respective free bases. Can use uridine, adenosine, guanosine, cytidine, thymidine, inosine and xanthosine as substrates. Also catalyzes the reverse reactions. The chain is Pyrimidine/purine nucleoside phosphorylase 1 from Psychrobacter cryohalolentis (strain ATCC BAA-1226 / DSM 17306 / VKM B-2378 / K5).